Here is a 231-residue protein sequence, read N- to C-terminus: DNA mismatch repair protein MutH (231 aa).

The protein belongs to the MutH family.

It is found in the cytoplasm. Functionally, sequence-specific endonuclease that cleaves unmethylated GATC sequences. It is involved in DNA mismatch repair. In Klebsiella pneumoniae subsp. pneumoniae (strain ATCC 700721 / MGH 78578), this protein is DNA mismatch repair protein MutH.